The primary structure comprises 259 residues: MGSKTLPAPVPIHPSLQLTNYSFLQAFNGLPVPAEHMPNLYGFSALHAVHLHQWTLGYPTLHLPRSSFSKVPGVSSLVDSRFQIPTFPLFPHMIHPKQESPNLSNKTKPRFDFANLALAATQEDHCKLGQMDDQGSPPTIGGLLDVTKLTPEKKPTRGRLPSKTKKEFVCKFCGRHFTKSYNLLIHERTHTDERPYTCDICHKAFRRQDHLRDHRYIHSKEKPFKCQECGKGFCQSRTLAVHKTLHTQVKELKPSKIKC.

3 C2H2-type zinc fingers span residues 168 to 190, 196 to 218, and 224 to 246; these read FVCKFCGRHFTKSYNLLIHERTH, YTCDICHKAFRRQDHLRDHRYIH, and FKCQECGKGFCQSRTLAVHKTLH.

Belongs to the Odd C2H2-type zinc-finger protein family.

It is found in the nucleus. Transcriptional repressor. Required for pronephric kidney development. This is Protein odd-skipped-related 1 from Xenopus tropicalis (Western clawed frog).